The following is a 492-amino-acid chain: Trehalose-6-phosphate synthase (492 aa).

D-glucose 6-phosphate is bound at residue Arg-25. 45–46 (GG) is a UDP-alpha-D-glucose binding site. 2 residues coordinate D-glucose 6-phosphate: Tyr-101 and Asp-155. UDP-alpha-D-glucose contacts are provided by Arg-297 and Lys-302. Arg-335 lines the D-glucose 6-phosphate pocket. 400-404 (LVAKE) contacts UDP-alpha-D-glucose.

It belongs to the glycosyltransferase 20 family. Homotetramer.

It catalyses the reaction ADP-alpha-D-glucose + D-glucose 6-phosphate = alpha,alpha-trehalose 6-phosphate + ADP + H(+). It carries out the reaction CDP-alpha-D-glucose + D-glucose 6-phosphate = alpha,alpha-trehalose 6-phosphate + CDP + H(+). The catalysed reaction is GDP-alpha-D-glucose + D-glucose 6-phosphate = alpha,alpha-trehalose 6-phosphate + GDP + H(+). The enzyme catalyses TDP-alpha-D-glucose + D-glucose 6-phosphate = 5-methyl-UDP + alpha,alpha-trehalose 6-phosphate + H(+). It catalyses the reaction D-glucose 6-phosphate + UDP-alpha-D-glucose = alpha,alpha-trehalose 6-phosphate + UDP + H(+). Its pathway is glycan biosynthesis; trehalose biosynthesis. Its function is as follows. Probably involved in the osmoprotection via the biosynthesis of trehalose and in the production of glycogen and alpha-glucan via the TreS-Pep2 branch involved in the biosynthesis of maltose-1-phosphate (M1P). Catalyzes the transfer of glucose from UDP-glucose (UDP-Glc) to D-glucose 6-phosphate (Glc-6-P) to form trehalose-6-phosphate. Probably also able to use ADP-Glc, CDP-Glc, GDP-Glc and TDP-Glc as glucosyl donors. The polypeptide is Trehalose-6-phosphate synthase (Mycobacterium avium (strain 104)).